A 507-amino-acid chain; its full sequence is Methionine--tRNA ligase (507 aa).

Positions 12–22 (YYVNDVSHIGH) match the 'HIGH' region motif. Positions 295–299 (KISKS) match the 'KMSKS' region motif. Residue lysine 298 coordinates ATP.

This sequence belongs to the class-I aminoacyl-tRNA synthetase family. MetG type 2B subfamily. Monomer.

Its subcellular location is the cytoplasm. The enzyme catalyses tRNA(Met) + L-methionine + ATP = L-methionyl-tRNA(Met) + AMP + diphosphate. Its function is as follows. Is required not only for elongation of protein synthesis but also for the initiation of all mRNA translation through initiator tRNA(fMet) aminoacylation. This chain is Methionine--tRNA ligase, found in Rickettsia typhi (strain ATCC VR-144 / Wilmington).